A 500-amino-acid chain; its full sequence is Galactose/methyl galactoside import ATP-binding protein MglA (500 aa).

ABC transporter domains lie at 8-243 and 257-500; these read LEME…VGRD and EMIL…AKYL. 40–47 lines the ATP pocket; sequence GENGAGKS.

It belongs to the ABC transporter superfamily. Galactose/methyl galactoside importer (TC 3.A.1.2.3) family. As to quaternary structure, the complex is composed of one ATP-binding protein (MglA), two transmembrane proteins (MglC) and a solute-binding protein (MglB).

The protein resides in the cell inner membrane. The enzyme catalyses D-galactose(out) + ATP + H2O = D-galactose(in) + ADP + phosphate + H(+). The catalysed reaction is methyl beta-D-galactoside(out) + ATP + H2O = methyl beta-D-galactoside(in) + ADP + phosphate + H(+). Its function is as follows. Part of the ABC transporter complex MglABC involved in galactose/methyl galactoside import. Responsible for energy coupling to the transport system. This Fusobacterium nucleatum subsp. nucleatum (strain ATCC 25586 / DSM 15643 / BCRC 10681 / CIP 101130 / JCM 8532 / KCTC 2640 / LMG 13131 / VPI 4355) protein is Galactose/methyl galactoside import ATP-binding protein MglA.